The following is a 281-amino-acid chain: Release factor glutamine methyltransferase (281 aa).

Positions 141 and 185 each coordinate S-adenosyl-L-methionine. Residue 185–188 (NPPY) coordinates substrate.

This sequence belongs to the protein N5-glutamine methyltransferase family. PrmC subfamily.

It catalyses the reaction L-glutaminyl-[peptide chain release factor] + S-adenosyl-L-methionine = N(5)-methyl-L-glutaminyl-[peptide chain release factor] + S-adenosyl-L-homocysteine + H(+). Functionally, methylates the class 1 translation termination release factors RF1/PrfA and RF2/PrfB on the glutamine residue of the universally conserved GGQ motif. The sequence is that of Release factor glutamine methyltransferase from Mycolicibacterium smegmatis (strain ATCC 700084 / mc(2)155) (Mycobacterium smegmatis).